The following is a 130-amino-acid chain: uncharacterized protein (130 aa).

The tract at residues 76–102 (RKCKNGPSPNKRGSASGCSRRGGGRGS) is disordered.

This is an uncharacterized protein from Saccharomyces cerevisiae (strain ATCC 204508 / S288c) (Baker's yeast).